The following is a 279-amino-acid chain: NADPH-dependent 7-cyano-7-deazaguanine reductase (279 aa).

86–88 (IES) lines the substrate pocket. An NADPH-binding site is contributed by 88 to 89 (SK). Cys187 functions as the Thioimide intermediate in the catalytic mechanism. Asp194 acts as the Proton donor in catalysis. A substrate-binding site is contributed by 226–227 (HE). Position 255–256 (255–256 (RG)) interacts with NADPH.

The protein belongs to the GTP cyclohydrolase I family. QueF type 2 subfamily. In terms of assembly, homodimer.

The protein localises to the cytoplasm. It catalyses the reaction 7-aminomethyl-7-carbaguanine + 2 NADP(+) = 7-cyano-7-deazaguanine + 2 NADPH + 3 H(+). It participates in tRNA modification; tRNA-queuosine biosynthesis. In terms of biological role, catalyzes the NADPH-dependent reduction of 7-cyano-7-deazaguanine (preQ0) to 7-aminomethyl-7-deazaguanine (preQ1). The polypeptide is NADPH-dependent 7-cyano-7-deazaguanine reductase (Glaesserella parasuis serovar 5 (strain SH0165) (Haemophilus parasuis)).